Reading from the N-terminus, the 176-residue chain is Large ribosomal subunit protein eL20 (176 aa).

Lys11 is covalently cross-linked (Glycyl lysine isopeptide (Lys-Gly) (interchain with G-Cter in SUMO2)). A Phosphotyrosine modification is found at Tyr63. Ser71 carries the post-translational modification Phosphoserine. Lys76 is subject to N6-succinyllysine. Ser123 is modified (phosphoserine). Glycyl lysine isopeptide (Lys-Gly) (interchain with G-Cter in SUMO2) cross-links involve residues Lys128 and Lys170.

It belongs to the eukaryotic ribosomal protein eL20 family. As to quaternary structure, component of the large ribosomal subunit. Binds IPO9 with high affinity.

It is found in the cytoplasm. Its function is as follows. Component of the large ribosomal subunit. The ribosome is a large ribonucleoprotein complex responsible for the synthesis of proteins in the cell. This is Large ribosomal subunit protein eL20 (RPL18A) from Oryctolagus cuniculus (Rabbit).